Here is an 829-residue protein sequence, read N- to C-terminus: Periplasmic nitrate reductase (829 aa).

A signal peptide (tat-type signal) is located at residues 1 to 31 (MKLSRRDFMKANAVAAAAAAAGLTIPTVARA). The 4Fe-4S Mo/W bis-MGD-type domain maps to 40-96 (ITWDKAPCRFCGTGCGVLVGTQNGRIVASQGDPDAPVNRGLNCIKGYFLPKIMYGKD). [4Fe-4S] cluster contacts are provided by C47, C50, C54, and C82. Residues K84, Q151, N176, C180, 213 to 220 (WGSNMAEM), 263 to 265 (QSD), M373, Q377, N483, 509 to 510 (SD), K532, D559, and 719 to 728 (TGRVLEHWHT) contribute to the Mo-bis(molybdopterin guanine dinucleotide) site. A substrate-binding site is contributed by F795. 2 residues coordinate Mo-bis(molybdopterin guanine dinucleotide): N803 and K820.

This sequence belongs to the prokaryotic molybdopterin-containing oxidoreductase family. NasA/NapA/NarB subfamily. In terms of assembly, component of the periplasmic nitrate reductase NapAB complex composed of NapA and NapB. [4Fe-4S] cluster is required as a cofactor. The cofactor is Mo-bis(molybdopterin guanine dinucleotide). Predicted to be exported by the Tat system. The position of the signal peptide cleavage has not been experimentally proven.

It localises to the periplasm. The catalysed reaction is 2 Fe(II)-[cytochrome] + nitrate + 2 H(+) = 2 Fe(III)-[cytochrome] + nitrite + H2O. Catalytic subunit of the periplasmic nitrate reductase complex NapAB. Receives electrons from NapB and catalyzes the reduction of nitrate to nitrite. This Edwardsiella ictaluri (strain 93-146) protein is Periplasmic nitrate reductase.